The chain runs to 253 residues: FGFR1 oncogene partner 2 homolog (253 aa).

Residues 5–104 (IEKALADAKA…SALELIMSKY (100 aa)) are a coiled coil. Ser-140 bears the Phosphoserine mark. Positions 160 to 223 (LERRHLEANQ…LREILQITRE (64 aa)) form a coiled coil. The interval 231–253 (DDASESTSLSALVTNSDLSLRKS) is disordered. Polar residues predominate over residues 235–253 (ESTSLSALVTNSDLSLRKS).

Belongs to the SIKE family.

The protein localises to the cytoplasm. Functionally, may be involved in wound healing pathway. This is FGFR1 oncogene partner 2 homolog (Fgfr1op2) from Mus musculus (Mouse).